A 146-amino-acid polypeptide reads, in one-letter code: UPF0178 protein BT9727_2823 (146 aa).

This sequence belongs to the UPF0178 family.

In Bacillus thuringiensis subsp. konkukian (strain 97-27), this protein is UPF0178 protein BT9727_2823.